The sequence spans 282 residues: Undecaprenyl-diphosphatase (282 aa).

Helical transmembrane passes span 39 to 59 (PGAAFTAIVQMGTLAAVLIYF), 85 to 105 (ATMGWMIAAGTIPIVFFGLLF), 115 to 135 (SLYWISAALIGLALILWLTEV), 153 to 173 (IGWKEALLIGVAQSIALIPGS), 196 to 216 (FSFLLSLPSVLAAALLQLYET), 230 to 250 (LLVATIAAGVVGYASIAFLIT), and 260 to 280 (FIIYRIVIGVAILGLIATGAI).

This sequence belongs to the UppP family.

The protein localises to the cell inner membrane. The enzyme catalyses di-trans,octa-cis-undecaprenyl diphosphate + H2O = di-trans,octa-cis-undecaprenyl phosphate + phosphate + H(+). Catalyzes the dephosphorylation of undecaprenyl diphosphate (UPP). Confers resistance to bacitracin. In Chlorobium chlorochromatii (strain CaD3), this protein is Undecaprenyl-diphosphatase.